Reading from the N-terminus, the 339-residue chain is Formyl peptide receptor-related sequence 6 (339 aa).

The Extracellular segment spans residues M1–R23. Residues N4 and N10 are each glycosylated (N-linked (GlcNAc...) asparagine). A helical membrane pass occupies residues V24–N44. The Cytoplasmic segment spans residues G45 to I62. A helical transmembrane segment spans residues C63–I85. Over V86–K99 the chain is Extracellular. C98 and C178 are disulfide-bonded. The helical transmembrane segment at F100 to A120 threads the bilayer. The Cytoplasmic segment spans residues M121–K144. Residues V145–T165 traverse the membrane as a helical segment. The Extracellular portion of the chain corresponds to T166–S198. A helical transmembrane segment spans residues L199 to I219. The Cytoplasmic portion of the chain corresponds to C220–R241. A helical membrane pass occupies residues V242–L262. Topologically, residues L263–N280 are extracellular. The chain crosses the membrane as a helical span at residues T281–G301. Over Q302–L339 the chain is Cytoplasmic.

This sequence belongs to the G-protein coupled receptor 1 family. Expressed exclusively in vomeronasal tissue. Expressed in 1.2 % of a subset of sensory neurons located in the apical layer of the vomeronasal organ. Each neuron appears to express only one receptor gene. Expressed in brain, spleen, skeletal muscle and at high level in testis.

It is found in the membrane. In terms of biological role, may have an olfactory function associated with the identification of pathogens or of pathogenic states. The sequence is that of Formyl peptide receptor-related sequence 6 (Fpr-rs6) from Mus musculus (Mouse).